The chain runs to 244 residues: Biosynthetic peptidoglycan transglycosylase (244 aa).

The helical transmembrane segment at 25–45 (LLLLLTAALLYQSWFLLHIVY) threads the bilayer.

This sequence belongs to the glycosyltransferase 51 family.

The protein resides in the cell inner membrane. It catalyses the reaction [GlcNAc-(1-&gt;4)-Mur2Ac(oyl-L-Ala-gamma-D-Glu-L-Lys-D-Ala-D-Ala)](n)-di-trans,octa-cis-undecaprenyl diphosphate + beta-D-GlcNAc-(1-&gt;4)-Mur2Ac(oyl-L-Ala-gamma-D-Glu-L-Lys-D-Ala-D-Ala)-di-trans,octa-cis-undecaprenyl diphosphate = [GlcNAc-(1-&gt;4)-Mur2Ac(oyl-L-Ala-gamma-D-Glu-L-Lys-D-Ala-D-Ala)](n+1)-di-trans,octa-cis-undecaprenyl diphosphate + di-trans,octa-cis-undecaprenyl diphosphate + H(+). It participates in cell wall biogenesis; peptidoglycan biosynthesis. Its function is as follows. Peptidoglycan polymerase that catalyzes glycan chain elongation from lipid-linked precursors. The chain is Biosynthetic peptidoglycan transglycosylase from Nitrosomonas europaea (strain ATCC 19718 / CIP 103999 / KCTC 2705 / NBRC 14298).